Consider the following 220-residue polypeptide: uncharacterized protein (220 aa).

4 helical membrane-spanning segments follow: residues 9–29 (LWIT…GSTQ), 54–74 (YAVH…FLAV), 105–125 (VQGI…IHLW), and 177–197 (VLAV…VIEM).

The protein localises to the cell membrane. This is an uncharacterized protein from Sinorhizobium fredii (strain NBRC 101917 / NGR234).